The chain runs to 476 residues: Probable pectin lyase F (476 aa).

A signal peptide spans 1–20 (MTLLRHLLTATALLGASVQA). A disulfide bridge links Cys84 with Cys108. Asn103 and Asn131 each carry an N-linked (GlcNAc...) asparagine glycan. Arg258 is a catalytic residue. 2 N-linked (GlcNAc...) asparagine glycosylation sites follow: Asn277 and Asn318. Cys325 and Cys333 are oxidised to a cystine. N-linked (GlcNAc...) asparagine glycosylation occurs at Asn385. Positions 412 to 476 (FVPAYSEAGP…HHHQGHGRGY (65 aa)) are disordered. The segment covering 426 to 453 (VPTQPSWSWRTVTNGPAPTGAPSDSPSA) has biased composition (polar residues). The segment covering 465 to 476 (NKHHHQGHGRGY) has biased composition (basic residues).

This sequence belongs to the polysaccharide lyase 1 family.

Its subcellular location is the secreted. It carries out the reaction Eliminative cleavage of (1-&gt;4)-alpha-D-galacturonan methyl ester to give oligosaccharides with 4-deoxy-6-O-methyl-alpha-D-galact-4-enuronosyl groups at their non-reducing ends.. Functionally, pectinolytic enzymes consist of four classes of enzymes: pectin lyase, polygalacturonase, pectin methylesterase and rhamnogalacturonase. Among pectinolytic enzymes, pectin lyase is the most important in depolymerization of pectin, since it cleaves internal glycosidic bonds of highly methylated pectins. In Aspergillus niger (strain ATCC MYA-4892 / CBS 513.88 / FGSC A1513), this protein is Probable pectin lyase F (pelF).